Here is a 246-residue protein sequence, read N- to C-terminus: tRNA pseudouridine synthase A (246 aa).

Catalysis depends on Asp-52, which acts as the Nucleophile. Position 112 (Tyr-112) interacts with substrate.

This sequence belongs to the tRNA pseudouridine synthase TruA family. Homodimer.

The enzyme catalyses uridine(38/39/40) in tRNA = pseudouridine(38/39/40) in tRNA. Its function is as follows. Formation of pseudouridine at positions 38, 39 and 40 in the anticodon stem and loop of transfer RNAs. The sequence is that of tRNA pseudouridine synthase A from Pelagibacter ubique (strain HTCC1062).